Consider the following 180-residue polypeptide: Cytokinin-beta-glucosidase 4 (180 aa).

Its function is as follows. Hydrolyzes cytokinin glucosides thus liberating free cytokinins. The sequence is that of Cytokinin-beta-glucosidase 4 (ROLC4) from Panax ginseng (Korean ginseng).